The chain runs to 120 residues: Galanin-like peptide (120 aa).

A signal peptide spans 1 to 22; the sequence is MALTVPLIVLAVLLSLMESPAS. A propeptide spanning residues 85–120 is cleaved from the precursor; the sequence is SLGETFAKPDSGVTFVGVPDVVPWKRIRPGTTRFQI.

This sequence belongs to the galanin family.

Its subcellular location is the secreted. Its function is as follows. Hypothalamic neuropeptide which binds to the G-protein-coupled galanin receptors (GALR1, GALR2 and GALR3). Involved in a large number of putative physiological functions in CNS homeostatic processes, including the regulation of gonadotropin-releasing hormone secretion. This is Galanin-like peptide (GALP) from Sus scrofa (Pig).